The sequence spans 320 residues: Polyadenylate-binding protein-interacting protein 13 (320 aa).

The disordered stretch occupies residues 1 to 44; sequence MAVAENVGVKVDSSNNQNIDNNTTSLVETKPSCSDDQTPKSKSS. Positions 12–44 are enriched in polar residues; that stretch reads DSSNNQNIDNNTTSLVETKPSCSDDQTPKSKSS. The PAM2-like motif lies at 65–75; sequence HLNPMAKEFVP. RRM domains lie at 137 to 212 and 234 to 310; these read RTVY…MSKT and KTVY…PSKT.

This is Polyadenylate-binding protein-interacting protein 13 (CID13) from Arabidopsis thaliana (Mouse-ear cress).